The sequence spans 118 residues: Ribonuclease P protein component (118 aa).

It belongs to the RnpA family. Consists of a catalytic RNA component (M1 or rnpB) and a protein subunit.

The enzyme catalyses Endonucleolytic cleavage of RNA, removing 5'-extranucleotides from tRNA precursor.. RNaseP catalyzes the removal of the 5'-leader sequence from pre-tRNA to produce the mature 5'-terminus. It can also cleave other RNA substrates such as 4.5S RNA. The protein component plays an auxiliary but essential role in vivo by binding to the 5'-leader sequence and broadening the substrate specificity of the ribozyme. The sequence is that of Ribonuclease P protein component from Vibrio vulnificus (strain CMCP6).